A 525-amino-acid polypeptide reads, in one-letter code: Lysine--tRNA ligase (525 aa).

Positions 40 to 48 (ASGIPHMGS) match the 'HIGH' region motif. The 'KMSKS' region signature appears at 295–299 (KISKS). Residue lysine 298 participates in ATP binding.

This sequence belongs to the class-I aminoacyl-tRNA synthetase family.

Its subcellular location is the cytoplasm. The catalysed reaction is tRNA(Lys) + L-lysine + ATP = L-lysyl-tRNA(Lys) + AMP + diphosphate. This is Lysine--tRNA ligase (lysS) from Cenarchaeum symbiosum (strain A).